The chain runs to 417 residues: Serine hydroxymethyltransferase (417 aa).

(6S)-5,6,7,8-tetrahydrofolate-binding positions include Leu-121 and 125–127 (GHL). Lys-229 is modified (N6-(pyridoxal phosphate)lysine). Residue 354–356 (SPF) participates in (6S)-5,6,7,8-tetrahydrofolate binding.

It belongs to the SHMT family. Homodimer. Pyridoxal 5'-phosphate serves as cofactor.

The protein resides in the cytoplasm. It catalyses the reaction (6R)-5,10-methylene-5,6,7,8-tetrahydrofolate + glycine + H2O = (6S)-5,6,7,8-tetrahydrofolate + L-serine. Its pathway is one-carbon metabolism; tetrahydrofolate interconversion. It functions in the pathway amino-acid biosynthesis; glycine biosynthesis; glycine from L-serine: step 1/1. Functionally, catalyzes the reversible interconversion of serine and glycine with tetrahydrofolate (THF) serving as the one-carbon carrier. This reaction serves as the major source of one-carbon groups required for the biosynthesis of purines, thymidylate, methionine, and other important biomolecules. Also exhibits THF-independent aldolase activity toward beta-hydroxyamino acids, producing glycine and aldehydes, via a retro-aldol mechanism. The protein is Serine hydroxymethyltransferase of Stutzerimonas stutzeri (strain A1501) (Pseudomonas stutzeri).